Here is a 466-residue protein sequence, read N- to C-terminus: Glutamate decarboxylase (466 aa).

N6-(pyridoxal phosphate)lysine is present on K277.

It belongs to the group II decarboxylase family. The cofactor is pyridoxal 5'-phosphate.

It catalyses the reaction L-glutamate + H(+) = 4-aminobutanoate + CO2. In terms of biological role, converts internalized glutamate to GABA and increases the internal pH. Involved in glutamate-dependent acid resistance. The sequence is that of Glutamate decarboxylase (gadB) from Lactococcus lactis subsp. lactis (strain IL1403) (Streptococcus lactis).